The sequence spans 396 residues: DNA-directed RNA polymerase subunit 6 (396 aa).

Disordered stretches follow at residues 1–137 (MSSK…DIED) and 290–396 (NQQK…DYSE). Acidic residues-rich tracts occupy residues 21–53 (EYYDDDAEFQNSEDEYPPSDEDLDNSGGSDDEN), 76–88 (IDPDDEAEYDTDG), and 97–137 (EMGE…DIED). The span at 290–312 (NQQKNSTTDTETLSTQENASTRV) shows a compositional bias: polar residues. Low complexity-rich tracts occupy residues 313-338 (SGSNLRSRSGSKSSKSNNSRSASKSN) and 346-366 (NSRTGSKSNSRTGSKSNSRTG). Residues 367 to 380 (SKSKKSSNTKSKSK) are compositionally biased toward basic residues. Acidic residues predominate over residues 385–396 (NSDDSDYSDYSE).

The protein belongs to the archaeal Rpo6/eukaryotic RPB6 RNA polymerase subunit family.

The enzyme catalyses RNA(n) + a ribonucleoside 5'-triphosphate = RNA(n+1) + diphosphate. In terms of biological role, DNA-dependent RNA polymerase catalyzes the transcription of DNA into RNA using the four ribonucleoside triphosphates as substrates. The sequence is that of DNA-directed RNA polymerase subunit 6 from Acanthamoeba polyphaga (Amoeba).